A 437-amino-acid chain; its full sequence is Epsilon-sarcoglycan (437 aa).

The Extracellular segment spans residues 1-317 (MLLFWWWELG…LKSRDYYTDF (317 aa)). N-linked (GlcNAc...) asparagine glycosylation occurs at N200. The chain crosses the membrane as a helical span at residues 318-338 (LVTLAVPSAVALVLFLILAYI). Topologically, residues 339–437 (MCCRREGVEK…QPQTTGKWYP (99 aa)) are cytoplasmic.

It belongs to the sarcoglycan alpha/epsilon family. N-glycosylated. Post-translationally, ubiquitinated, leading to its degradation by the proteasome. In terms of tissue distribution, identified in all tissues tested. Expression highest in lung and placenta, moderate in brain, heart and skeletal muscle, low in kidney and liver. Also detected in embryo.

The protein localises to the cell membrane. It localises to the sarcolemma. The protein resides in the golgi apparatus. Its subcellular location is the cell projection. It is found in the dendrite. The protein localises to the cytoplasm. It localises to the cytoskeleton. Component of the sarcoglycan complex, a subcomplex of the dystrophin-glycoprotein complex which forms a link between the F-actin cytoskeleton and the extracellular matrix. This Mus musculus (Mouse) protein is Epsilon-sarcoglycan (Sgce).